The chain runs to 471 residues: Tigger transposable element-derived protein 3 (471 aa).

The 53-residue stretch at 3 to 55 (LSSKKKLHALSLAEKIQVLELLDESKMSQSEVARRFQVSQPQISRICKNKEKL) folds into the HTH psq-type domain. 2 consecutive DNA-binding regions (H-T-H motif) follow at residues 31 to 51 (QSEV…ICKN) and 100 to 130 (PMLL…WKRR). The HTH CENPB-type domain maps to 67–137 (ERKRKRESKY…KRRNNVGFGA (71 aa)). The 194-residue stretch at 167–360 (FSPEDVFGCA…VPPQLIFSSF (194 aa)) folds into the DDE-1 domain.

Belongs to the tigger transposable element derived protein family.

It localises to the nucleus. The chain is Tigger transposable element-derived protein 3 (TIGD3) from Homo sapiens (Human).